The sequence spans 179 residues: Translation initiation factor IF-3 (179 aa).

The protein belongs to the IF-3 family. In terms of assembly, monomer.

It is found in the cytoplasm. In terms of biological role, IF-3 binds to the 30S ribosomal subunit and shifts the equilibrium between 70S ribosomes and their 50S and 30S subunits in favor of the free subunits, thus enhancing the availability of 30S subunits on which protein synthesis initiation begins. The polypeptide is Translation initiation factor IF-3 (Lactococcus lactis subsp. lactis (strain IL1403) (Streptococcus lactis)).